The primary structure comprises 88 residues: Large ribosomal subunit protein eL20 (88 aa).

This sequence belongs to the eukaryotic ribosomal protein eL20 family. As to quaternary structure, part of the 50S ribosomal subunit. Binds 23S rRNA.

The chain is Large ribosomal subunit protein eL20 from Aeropyrum pernix (strain ATCC 700893 / DSM 11879 / JCM 9820 / NBRC 100138 / K1).